A 236-amino-acid chain; its full sequence is Phosphoribosylaminoimidazole-succinocarboxamide synthase (236 aa).

It belongs to the SAICAR synthetase family.

It catalyses the reaction 5-amino-1-(5-phospho-D-ribosyl)imidazole-4-carboxylate + L-aspartate + ATP = (2S)-2-[5-amino-1-(5-phospho-beta-D-ribosyl)imidazole-4-carboxamido]succinate + ADP + phosphate + 2 H(+). Its pathway is purine metabolism; IMP biosynthesis via de novo pathway; 5-amino-1-(5-phospho-D-ribosyl)imidazole-4-carboxamide from 5-amino-1-(5-phospho-D-ribosyl)imidazole-4-carboxylate: step 1/2. This Streptococcus equi subsp. zooepidemicus (strain MGCS10565) protein is Phosphoribosylaminoimidazole-succinocarboxamide synthase.